Here is a 257-residue protein sequence, read N- to C-terminus: UPF0246 protein RSKD131_2757 (257 aa).

Belongs to the UPF0246 family.

This chain is UPF0246 protein RSKD131_2757, found in Cereibacter sphaeroides (strain KD131 / KCTC 12085) (Rhodobacter sphaeroides).